The primary structure comprises 247 residues: Fumarate reductase iron-sulfur subunit (247 aa).

Tyrosine 12 contacts a menaquinone. Residues 14–94 (PEIESAPTFQ…PGPVRVEPMR (81 aa)) form the 2Fe-2S ferredoxin-type domain. Residues cysteine 56, cysteine 61, and cysteine 76 each contribute to the [2Fe-2S] cluster site. The 4Fe-4S ferredoxin-type domain occupies 140 to 169 (LDAFKQFSMCINCMLCYSACPVYALDPDFL). [4Fe-4S] cluster contacts are provided by cysteine 149, cysteine 152, and cysteine 155. Residues cysteine 159, cysteine 205, and cysteine 211 each contribute to the [3Fe-4S] cluster site. Cysteine 215 lines the [4Fe-4S] cluster pocket. 226 to 229 (QRYK) lines the a menaquinone pocket.

The protein belongs to the succinate dehydrogenase/fumarate reductase iron-sulfur protein family. Fumarate dehydrogenase forms part of an enzyme complex containing four subunits: a flavoprotein, an iron-sulfur, and two hydrophobic anchor proteins. [2Fe-2S] cluster is required as a cofactor. Requires [3Fe-4S] cluster as cofactor. [4Fe-4S] cluster serves as cofactor.

The protein localises to the cell membrane. It catalyses the reaction a quinone + succinate = fumarate + a quinol. The enzyme catalyses a menaquinone + succinate = a menaquinol + fumarate. This is Fumarate reductase iron-sulfur subunit (frdB) from Mycobacterium tuberculosis (strain CDC 1551 / Oshkosh).